The following is a 354-amino-acid chain: Rhodopsin (354 aa).

Residues 1-36 are Extracellular-facing; that stretch reads MNGTEGPMFYVPMSNATGVVKSPYDYPQYYLVAPWA. N-linked (GlcNAc...) asparagine glycosylation is found at Asn-2 and Asn-15. Residues 37–61 form a helical membrane-spanning segment; that stretch reads YGCLAAYMFFLIITGFPINFLTLYV. Residues 62–73 are Cytoplasmic-facing; that stretch reads TIEHKKLRTPLN. The chain crosses the membrane as a helical span at residues 74 to 96; the sequence is YILLNLAISDLFMVFGGFTTTMY. Topologically, residues 97–110 are extracellular; it reads TSLHGYFVFGRIGC. An intrachain disulfide couples Cys-110 to Cys-187. A helical transmembrane segment spans residues 111 to 133; it reads NLEGFFATLGGEMGLWSLVVLAF. Residues 134-136 carry the 'Ionic lock' involved in activated form stabilization motif; it reads ERW. At 134 to 152 the chain is on the cytoplasmic side; that stretch reads ERWMVVCKPVSNFRFGENH. A helical transmembrane segment spans residues 153–173; sequence AIMGVVFTWFMACTCAVPPLV. The Extracellular segment spans residues 174 to 202; it reads GWSRYIPEGMQCSCGVDYYTRAPGYNNES. The helical transmembrane segment at 203-224 threads the bilayer; sequence FVIYMFLVHFIIPLIVIFFCYG. Residues 225 to 252 are Cytoplasmic-facing; sequence RLVCTVKDAAAQQQESETTQRAEREVTR. The chain crosses the membrane as a helical span at residues 253 to 274; it reads MVVIMVIGFLICWIPYASVAWY. Over 275–286 the chain is Extracellular; sequence IFTHQGSEFGPV. The helical transmembrane segment at 287 to 308 threads the bilayer; the sequence is FMTVPAFFAKSAAVYNPCIYIC. Residue Lys-296 is modified to N6-(retinylidene)lysine. Residues 309-354 lie on the Cytoplasmic side of the membrane; sequence MNKQFRHCMITTLCCGKNPFEEEEGASTTASKTEASSVSSSSVSPA. 2 S-palmitoyl cysteine lipidation sites follow: Cys-322 and Cys-323. The tract at residues 333-354 is disordered; that stretch reads GASTTASKTEASSVSSSSVSPA. Low complexity predominate over residues 334–354; that stretch reads ASTTASKTEASSVSSSSVSPA.

It belongs to the G-protein coupled receptor 1 family. Opsin subfamily. Phosphorylated on some or all of the serine and threonine residues present in the C-terminal region. Post-translationally, contains one covalently linked retinal chromophore.

It is found in the membrane. The protein localises to the cell projection. Its subcellular location is the cilium. It localises to the photoreceptor outer segment. Photoreceptor required for image-forming vision at low light intensity. While most salt water fish species use retinal as chromophore, most freshwater fish use 3-dehydroretinal, or a mixture of retinal and 3-dehydroretinal. Light-induced isomerization of 11-cis to all-trans retinal triggers a conformational change that activates signaling via G-proteins. Subsequent receptor phosphorylation mediates displacement of the bound G-protein alpha subunit by arrestin and terminates signaling. This is Rhodopsin (rho) from Cyprinus carpio (Common carp).